A 312-amino-acid polypeptide reads, in one-letter code: GDSL esterase/lipase At2g38180 (312 aa).

The signal sequence occupies residues 1–22 (MVGPVRPQIVLFGSSIVQYSFT). A glycan (N-linked (GlcNAc...) asparagine) is linked at Asn79. The segment at 285–312 (EPPHPVSLCDHELTQNEQLEPPQPTARL) is disordered.

Belongs to the 'GDSL' lipolytic enzyme family.

It localises to the secreted. In Arabidopsis thaliana (Mouse-ear cress), this protein is GDSL esterase/lipase At2g38180.